Reading from the N-terminus, the 348-residue chain is Dihydroorotase (348 aa).

Zn(2+) contacts are provided by histidine 14 and histidine 16. Residues histidine 16–arginine 18 and asparagine 42 each bind substrate. 3 residues coordinate Zn(2+): lysine 100, histidine 137, and histidine 175. At lysine 100 the chain carries N6-carboxylysine. Histidine 137 lines the substrate pocket. Substrate is bound at residue leucine 220. Position 248 (aspartate 248) interacts with Zn(2+). Residue aspartate 248 is part of the active site. 2 residues coordinate substrate: histidine 252 and alanine 264.

The protein belongs to the metallo-dependent hydrolases superfamily. DHOase family. Class II DHOase subfamily. As to quaternary structure, homodimer. Requires Zn(2+) as cofactor.

It catalyses the reaction (S)-dihydroorotate + H2O = N-carbamoyl-L-aspartate + H(+). Its pathway is pyrimidine metabolism; UMP biosynthesis via de novo pathway; (S)-dihydroorotate from bicarbonate: step 3/3. Catalyzes the reversible cyclization of carbamoyl aspartate to dihydroorotate. This Pseudomonas aeruginosa (strain LESB58) protein is Dihydroorotase.